Consider the following 522-residue polypeptide: Maturase K (522 aa).

The protein belongs to the intron maturase 2 family. MatK subfamily.

Its subcellular location is the plastid. The protein localises to the chloroplast. In terms of biological role, usually encoded in the trnK tRNA gene intron. Probably assists in splicing its own and other chloroplast group II introns. This is Maturase K from Iris sanguinea (Japanese iris).